The primary structure comprises 223 residues: Probable transaldolase (223 aa).

Residue Lys-86 is the Schiff-base intermediate with substrate of the active site.

This sequence belongs to the transaldolase family. Type 3B subfamily.

It localises to the cytoplasm. It carries out the reaction D-sedoheptulose 7-phosphate + D-glyceraldehyde 3-phosphate = D-erythrose 4-phosphate + beta-D-fructose 6-phosphate. It participates in carbohydrate degradation; pentose phosphate pathway; D-glyceraldehyde 3-phosphate and beta-D-fructose 6-phosphate from D-ribose 5-phosphate and D-xylulose 5-phosphate (non-oxidative stage): step 2/3. Functionally, transaldolase is important for the balance of metabolites in the pentose-phosphate pathway. This is Probable transaldolase (tal) from Thermoplasma volcanium (strain ATCC 51530 / DSM 4299 / JCM 9571 / NBRC 15438 / GSS1).